The primary structure comprises 273 residues: Nitrogenase iron protein 5 (273 aa).

Residue Gly8–Ser15 participates in ATP binding. Cys94 contributes to the [4Fe-4S] cluster binding site. ADP-ribosylarginine; by dinitrogenase reductase ADP-ribosyltransferase is present on Arg97. Cys129 contacts [4Fe-4S] cluster.

Belongs to the NifH/BchL/ChlL family. In terms of assembly, homodimer. It depends on [4Fe-4S] cluster as a cofactor. In terms of processing, the reversible ADP-ribosylation of Arg-97 inactivates the nitrogenase reductase and regulates nitrogenase activity.

The enzyme catalyses N2 + 8 reduced [2Fe-2S]-[ferredoxin] + 16 ATP + 16 H2O = H2 + 8 oxidized [2Fe-2S]-[ferredoxin] + 2 NH4(+) + 16 ADP + 16 phosphate + 6 H(+). Functionally, the key enzymatic reactions in nitrogen fixation are catalyzed by the nitrogenase complex, which has 2 components: the iron protein and the molybdenum-iron protein. This chain is Nitrogenase iron protein 5 (nifH5), found in Clostridium pasteurianum.